The sequence spans 67 residues: ATP synthase protein 8 (67 aa).

Residues 8 to 24 form a helical membrane-spanning segment; it reads TWFITILSMLMTLFILF. Position 54 is an N6-acetyllysine; alternate (Lys-54). An N6-succinyllysine; alternate modification is found at Lys-54. Residue Lys-57 is modified to N6-acetyllysine.

The protein belongs to the ATPase protein 8 family. As to quaternary structure, F-type ATPases have 2 components, CF(1) - the catalytic core - and CF(0) - the membrane proton channel. Component of an ATP synthase complex composed of ATP5PB, ATP5MC1, ATP5F1E, ATP5PD, ATP5ME, ATP5PF, ATP5MF, MT-ATP6, MT-ATP8, ATP5F1A, ATP5F1B, ATP5F1D, ATP5F1C, ATP5PO, ATP5MG, ATP5MK and ATP5MJ. Interacts with PRICKLE3.

The protein localises to the mitochondrion membrane. Functionally, mitochondrial membrane ATP synthase (F(1)F(0) ATP synthase or Complex V) produces ATP from ADP in the presence of a proton gradient across the membrane which is generated by electron transport complexes of the respiratory chain. F-type ATPases consist of two structural domains, F(1) - containing the extramembraneous catalytic core and F(0) - containing the membrane proton channel, linked together by a central stalk and a peripheral stalk. During catalysis, ATP synthesis in the catalytic domain of F(1) is coupled via a rotary mechanism of the central stalk subunits to proton translocation. Part of the complex F(0) domain. Minor subunit located with subunit a in the membrane. The chain is ATP synthase protein 8 (MT-ATP8) from Vicugna pacos (Alpaca).